A 246-amino-acid polypeptide reads, in one-letter code: Uridylate kinase (246 aa).

ATP is bound at residue 20–23 (KISG). Residues 28 to 33 (GDQGYG) form an involved in allosteric activation by GTP region. A UMP-binding site is contributed by G62. Positions 63 and 67 each coordinate ATP. Residues D82 and 143 to 150 (TGNPYFTT) contribute to the UMP site. The ATP site is built by T170, Y176, and D179.

It belongs to the UMP kinase family. In terms of assembly, homohexamer.

The protein localises to the cytoplasm. It carries out the reaction UMP + ATP = UDP + ADP. It functions in the pathway pyrimidine metabolism; CTP biosynthesis via de novo pathway; UDP from UMP (UMPK route): step 1/1. With respect to regulation, allosterically activated by GTP. Inhibited by UTP. Its function is as follows. Catalyzes the reversible phosphorylation of UMP to UDP. This is Uridylate kinase from Cereibacter sphaeroides (strain ATCC 17025 / ATH 2.4.3) (Rhodobacter sphaeroides).